The chain runs to 896 residues: DNA mismatch repair protein MutS (896 aa).

638–645 (GPNMSGKS) provides a ligand contact to ATP.

It belongs to the DNA mismatch repair MutS family.

Its function is as follows. This protein is involved in the repair of mismatches in DNA. It is possible that it carries out the mismatch recognition step. This protein has a weak ATPase activity. This chain is DNA mismatch repair protein MutS, found in Fusobacterium nucleatum subsp. nucleatum (strain ATCC 25586 / DSM 15643 / BCRC 10681 / CIP 101130 / JCM 8532 / KCTC 2640 / LMG 13131 / VPI 4355).